The primary structure comprises 211 residues: Urease accessory protein UreF (211 aa).

Positions 71-93 (DDADRETDARTPAPAARHASRSQ) are disordered.

The protein belongs to the UreF family. As to quaternary structure, ureD, UreF and UreG form a complex that acts as a GTP-hydrolysis-dependent molecular chaperone, activating the urease apoprotein by helping to assemble the nickel containing metallocenter of UreC. The UreE protein probably delivers the nickel.

Its subcellular location is the cytoplasm. Functionally, required for maturation of urease via the functional incorporation of the urease nickel metallocenter. The protein is Urease accessory protein UreF of Mycobacterium bovis (strain ATCC BAA-935 / AF2122/97).